The sequence spans 100 residues: ESAT-6-like protein EsxB (100 aa).

Residues 80-100 form a disordered region; that stretch reads GTQYTSTDEDQAGTLASSMNI.

The protein belongs to the WXG100 family. CFP-10 subfamily. In terms of assembly, forms a tight 1:1 complex with EsxA. An artificial EsxA-EsxB heterodimer interacts with EspA.

It is found in the secreted. Its function is as follows. An exported protein. Plays a role in DNA conjugation, in at least a donor strain. This chain is ESAT-6-like protein EsxB, found in Mycolicibacterium smegmatis (strain ATCC 700084 / mc(2)155) (Mycobacterium smegmatis).